The following is a 219-amino-acid chain: Large ribosomal subunit protein uL16y (219 aa).

The protein belongs to the universal ribosomal protein uL16 family. In terms of assembly, component of the small ribosomal subunit. Mature ribosomes consist of a small (40S) and a large (60S) subunit. The 40S subunit contains about 33 different proteins and 1 molecule of RNA (18S). The 60S subunit contains about 49 different proteins and 3 molecules of RNA (25S, 5.8S and 5S).

This is Large ribosomal subunit protein uL16y (SG12) from Oryza sativa subsp. japonica (Rice).